A 317-amino-acid chain; its full sequence is Transaldolase (317 aa).

Lys-132 serves as the catalytic Schiff-base intermediate with substrate.

It belongs to the transaldolase family. Type 1 subfamily. Homodimer.

Its subcellular location is the cytoplasm. It catalyses the reaction D-sedoheptulose 7-phosphate + D-glyceraldehyde 3-phosphate = D-erythrose 4-phosphate + beta-D-fructose 6-phosphate. Its pathway is carbohydrate degradation; pentose phosphate pathway; D-glyceraldehyde 3-phosphate and beta-D-fructose 6-phosphate from D-ribose 5-phosphate and D-xylulose 5-phosphate (non-oxidative stage): step 2/3. In terms of biological role, transaldolase is important for the balance of metabolites in the pentose-phosphate pathway. The chain is Transaldolase from Shewanella denitrificans (strain OS217 / ATCC BAA-1090 / DSM 15013).